Reading from the N-terminus, the 1187-residue chain is Disease resistance protein TAO1 (1187 aa).

The TIR domain occupies 38 to 202 (WLHPVFLSFR…KISKDVSDVL (165 aa)). Glu113 is an active-site residue. Residues 217–478 (EAHTTEITSL…FFRRERIETL (262 aa)) enclose the NB-ARC domain. LRR repeat units follow at residues 498–522 (DKSL…GLDI), 611–633 (SRKL…KFNP), 635–658 (FLVK…PIRN), 660–679 (KWMD…FSTA), 680–703 (TNLQ…IGNA), 704–727 (TNLL…IGNL), 728–750 (TNLK…SFGN), 752–775 (TSLK…IGNI), 799–823 (NTNL…MLNL), 824–849 (TRLE…VINL), 870–894 (ATNL…IWNI), 895–918 (TNLQ…VENA), 920–942 (NLQS…IWRI), and 953–974 (CSSL…LILD).

The enzyme catalyses NAD(+) + H2O = ADP-D-ribose + nicotinamide + H(+). Functionally, TIR-NB-LRR receptor-like protein that contributes to disease resistance induced by the Pseudomonas syringae type III effector AvrB. Acts additively with RPM1 to generate a full disease resistance response to P.syringae expressing this type III effector. The chain is Disease resistance protein TAO1 from Arabidopsis thaliana (Mouse-ear cress).